The chain runs to 503 residues: Probable apyrase 4 (503 aa).

The segment covering 1 to 14 (MQRSNARSRSNINS) has biased composition (low complexity). The interval 1 to 39 (MQRSNARSRSNINSDMVDPPEVQTSPGNHRSSPSTAAKP) is disordered. Over 1–45 (MQRSNARSRSNINSDMVDPPEVQTSPGNHRSSPSTAAKPKSKRTK) the chain is Cytoplasmic. The helical; Signal-anchor for type II membrane protein transmembrane segment at 46 to 66 (SIIFVIVACVTIALGLLFIGY) threads the bilayer. At 67-503 (SILRSGRNRR…DLSNVAKYKI (437 aa)) the chain is on the extracellular side. Residue 83–93 (VIIDGGSSGTR) coordinates ATP. Catalysis depends on glutamate 206, which acts as the Proton acceptor. 230–240 (GIVELGGASAQ) is an ATP binding site. Residues asparagine 261, asparagine 293, and asparagine 338 are each glycosylated (N-linked (GlcNAc...) asparagine).

This sequence belongs to the GDA1/CD39 NTPase family. Requires Ca(2+) as cofactor. Expressed both in the primary root and lateral root but not in the rosette leaves.

The protein localises to the membrane. It carries out the reaction a ribonucleoside 5'-triphosphate + 2 H2O = a ribonucleoside 5'-phosphate + 2 phosphate + 2 H(+). In terms of biological role, catalyzes the hydrolysis of phosphoanhydride bonds of nucleoside tri- and di-phosphates. The protein is Probable apyrase 4 (APY4) of Arabidopsis thaliana (Mouse-ear cress).